Here is a 194-residue protein sequence, read N- to C-terminus: Imidazoleglycerol-phosphate dehydratase (194 aa).

The protein belongs to the imidazoleglycerol-phosphate dehydratase family.

The protein resides in the cytoplasm. It carries out the reaction D-erythro-1-(imidazol-4-yl)glycerol 3-phosphate = 3-(imidazol-4-yl)-2-oxopropyl phosphate + H2O. It participates in amino-acid biosynthesis; L-histidine biosynthesis; L-histidine from 5-phospho-alpha-D-ribose 1-diphosphate: step 6/9. The polypeptide is Imidazoleglycerol-phosphate dehydratase (Clostridium kluyveri (strain NBRC 12016)).